Reading from the N-terminus, the 736-residue chain is MKNQNQHNTSKCPYHGSVTSYNSNRTTNKDWWPNQLNLSILHQHDRKTNPHDEEFNYAEEFQKLDYWALKEDLRKLMTESQDWWPADYGHYGPLFIRMAWHSAGTYRIGDGRGGGSTGTQRFAPLNSWPDNANLDKARRLLWPIKKKYGNKISWADLMILAGNVAIESMGGKTIGFGGGREDVWHPEEDIYWGAEKEWLASERYSGDRELENPLAAVQMGLIYVNPEGPDGKPDPVAAARDIRETFRRMGMNDEETVALIAGGHTFGKAHGAGPASHVGPEPEAAPIEAQGLGWISSYGKGKGRDTITSGIEGAWTPTPTQWDNSYFRLLFEYEWKLTKSPAGAYQWEAVNLREEDLAPDAEDPNVKVPPMMMTTDLALRFDPEYEKIARRFYENPEEFADAFARAWFKLTHRDMGPKTRYLGPEVPKEDFIWQDPIPTVDYELSDAEIEEIKAKILNSGLTVSELVKTAWASASTFRNSDKRGGANGARIRLAPQKDWEVNEPERLAKVLSVYEDIQRELPKKVSIADLIVLGGSAAVEKAARDAGFDVKVPFIPGRGDATQEQTDVESFSVLEPFADGFRNYQKKEYSVGPEELLIDKAQLLGLTAPEMTVLVGGLRVLGANYRDLPHGVFTDRIGVLTNDFFVNLVDMNYEWVPTEGGIYEIRDRQTGEVRWTATRVDLIFGANSILRSYAEFYAQDDNREKFVRDFINAWVKVMNADRFDIHLKQAKESVTV.

The segment at residues Trp-100–Tyr-223 is a cross-link (tryptophyl-tyrosyl-methioninium (Trp-Tyr) (with M-249)). His-101 acts as the Proton acceptor in catalysis. Residues Tyr-223–Met-249 constitute a cross-link (tryptophyl-tyrosyl-methioninium (Tyr-Met) (with W-100)). His-264 contributes to the heme b binding site.

This sequence belongs to the peroxidase family. Peroxidase/catalase subfamily. In terms of assembly, homodimer or homotetramer. Heme b is required as a cofactor. Formation of the three residue Trp-Tyr-Met cross-link is important for the catalase, but not the peroxidase activity of the enzyme.

The enzyme catalyses H2O2 + AH2 = A + 2 H2O. It carries out the reaction 2 H2O2 = O2 + 2 H2O. Functionally, bifunctional enzyme with both catalase and broad-spectrum peroxidase activity. The chain is Catalase-peroxidase from Geobacillus kaustophilus (strain HTA426).